The sequence spans 134 residues: Orexigenic neuropeptide QRFP (134 aa).

The first 18 residues, 1-18 (MRSPYSLPYLLFLPLGAC), serve as a signal peptide directing secretion. Residues 19–88 (FPVLDTEEPV…RAGFQLRLGR (70 aa)) constitute a propeptide that is removed on maturation. F131 is modified (phenylalanine amide).

This sequence belongs to the RFamide neuropeptide family. As to quaternary structure, ligand for the G-protein coupled receptor QRFPR/GPR103. As to expression, expressed in the hypothalamus.

The protein localises to the secreted. In terms of biological role, stimulates feeding behavior, metabolic rate and locomotor activity and increases blood pressure. May have orexigenic activity. May promote aldosterone secretion by the adrenal gland. This Bos taurus (Bovine) protein is Orexigenic neuropeptide QRFP.